Consider the following 258-residue polypeptide: Regulatory protein RecX (258 aa).

Belongs to the RecX family.

Its subcellular location is the cytoplasm. Modulates RecA activity. This Streptococcus agalactiae serotype Ia (strain ATCC 27591 / A909 / CDC SS700) protein is Regulatory protein RecX.